The sequence spans 215 residues: Cytochrome b6 (215 aa).

The helical transmembrane segment at isoleucine 32–phenylalanine 52 threads the bilayer. Cysteine 35 serves as a coordination point for heme c. Residues histidine 86 and histidine 100 each contribute to the heme b site. 3 helical membrane passes run alanine 90–phenylalanine 110, leucine 116–tyrosine 136, and leucine 186–isoleucine 206. The heme b site is built by histidine 187 and histidine 202.

It belongs to the cytochrome b family. PetB subfamily. The 4 large subunits of the cytochrome b6-f complex are cytochrome b6, subunit IV (17 kDa polypeptide, PetD), cytochrome f and the Rieske protein, while the 4 small subunits are PetG, PetL, PetM and PetN. The complex functions as a dimer. Requires heme b as cofactor. The cofactor is heme c.

The protein localises to the plastid. The protein resides in the chloroplast thylakoid membrane. Functionally, component of the cytochrome b6-f complex, which mediates electron transfer between photosystem II (PSII) and photosystem I (PSI), cyclic electron flow around PSI, and state transitions. This chain is Cytochrome b6, found in Citrus sinensis (Sweet orange).